Consider the following 150-residue polypeptide: Endoribonuclease YbeY (150 aa).

Residues histidine 108, histidine 112, and histidine 118 each coordinate Zn(2+).

The protein belongs to the endoribonuclease YbeY family. Zn(2+) is required as a cofactor.

The protein resides in the cytoplasm. Its function is as follows. Single strand-specific metallo-endoribonuclease involved in late-stage 70S ribosome quality control and in maturation of the 3' terminus of the 16S rRNA. This Methylococcus capsulatus (strain ATCC 33009 / NCIMB 11132 / Bath) protein is Endoribonuclease YbeY.